We begin with the raw amino-acid sequence, 70 residues long: uncharacterized protein (70 aa).

The protein localises to the plastid. Its subcellular location is the chloroplast. This is an uncharacterized protein from Mesostigma viride (Green alga).